A 350-amino-acid chain; its full sequence is m7GpppX diphosphatase (350 aa).

S2 is modified (N-acetylserine). S60 bears the Phosphoserine mark. T66 is modified (phosphothreonine). The residue at position 66 (T66) is a Phosphothreonine; by YAK1. Y70 carries the post-translational modification Phosphotyrosine. A Phosphothreonine modification is found at T120. Residues E171, K196, and 259–270 (HYQPSYYHFHIH) each bind substrate. A Histidine triad motif motif is present at residues 266-270 (HFHIH). H268 acts as the Nucleophile in catalysis.

This sequence belongs to the HIT family. As to quaternary structure, homodimer. Forms heterodimer with DCS2; the interaction inhibits the DCS1 scavenger decapping activity during post-diauxic growth. In terms of processing, phosphorylated. Phosphorylation occurs upon glucose deprivation.

The protein resides in the cytoplasm. It localises to the perinuclear region. The protein localises to the P-body. It catalyses the reaction a 5'-end (N(7)-methyl 5'-triphosphoguanosine)-ribonucleoside in mRNA + H2O = N(7)-methyl-GMP + a 5'-end diphospho-ribonucleoside in mRNA + 2 H(+). With respect to regulation, the hydrolytic product 7-methylguanosine diphosphate (m7GDP) efficiently inhibits the decapping scavenger activity and acts as a competitive inhibitor in vitro. Its function is as follows. Decapping scavenger enzyme that catalyzes the cleavage of a residual cap structure following the degradation of mRNAs by the 3'-&gt;5' exosome-mediated mRNA decay pathway. Hydrolyzes cap analog structures like 7-methylguanosine nucleoside triphosphate (m7GpppG) and tri-methyl guanosine nucleoside triphosphate (m3(2,2,7)GpppG) with up to 10 nucleotide substrates (small capped oligoribonucleotides) and specifically releases 5'-phosphorylated RNA fragments and 7-methylguanosine monophosphate (m7GMP) or tri-methyl guanosine nucleoside monophosphate (m3(2,2,7)GMP), respectively. Does not hydrolyze unmethylated cap analog (GpppG) and shows no decapping activity on intact m7GpppG-capped mRNA molecules longer than 25 nucleotides. Does not hydrolyze 7-methylguanosine diphosphate (m7GDP) and tri-methylguanosine diphosphate (m3(2,2,7)GDP) to (m(7)GMP) and m3(2,2,7)GMP, respectively. May also play a role in the 5'-&gt;3 mRNA decay pathway; m7GDP, the downstream product released by the 5'-&gt;3' mRNA mediated decapping activity, may be also converted by DCS1 to m7GMP. Binds to m7GpppG and strongly to m7GDP. May also regulate the 5'-&gt;3' exoribonucleolytic mRNA decay pathway in a cap-independent manner. Negatively regulates trehalase activity. This is m7GpppX diphosphatase from Saccharomyces cerevisiae (strain ATCC 204508 / S288c) (Baker's yeast).